The sequence spans 491 residues: Protein nucleotidyltransferase YdiU (491 aa).

ATP is bound by residues Gly92, Gly94, Arg95, Lys115, Asp127, Gly128, Arg178, and Arg185. Asp254 serves as the catalytic Proton acceptor. Mg(2+)-binding residues include Asn255 and Asp264. Asp264 is an ATP binding site.

The protein belongs to the SELO family. Mg(2+) is required as a cofactor. It depends on Mn(2+) as a cofactor.

The catalysed reaction is L-seryl-[protein] + ATP = 3-O-(5'-adenylyl)-L-seryl-[protein] + diphosphate. The enzyme catalyses L-threonyl-[protein] + ATP = 3-O-(5'-adenylyl)-L-threonyl-[protein] + diphosphate. It catalyses the reaction L-tyrosyl-[protein] + ATP = O-(5'-adenylyl)-L-tyrosyl-[protein] + diphosphate. It carries out the reaction L-histidyl-[protein] + UTP = N(tele)-(5'-uridylyl)-L-histidyl-[protein] + diphosphate. The catalysed reaction is L-seryl-[protein] + UTP = O-(5'-uridylyl)-L-seryl-[protein] + diphosphate. The enzyme catalyses L-tyrosyl-[protein] + UTP = O-(5'-uridylyl)-L-tyrosyl-[protein] + diphosphate. Its function is as follows. Nucleotidyltransferase involved in the post-translational modification of proteins. It can catalyze the addition of adenosine monophosphate (AMP) or uridine monophosphate (UMP) to a protein, resulting in modifications known as AMPylation and UMPylation. The polypeptide is Protein nucleotidyltransferase YdiU (Mycolicibacterium paratuberculosis (strain ATCC BAA-968 / K-10) (Mycobacterium paratuberculosis)).